The following is a 173-amino-acid chain: Probable glutathione peroxidase 5 (173 aa).

The N-myristoyl glycine moiety is linked to residue Gly2. Cys46 is an active-site residue.

It belongs to the glutathione peroxidase family. In terms of tissue distribution, ubiquitous.

It localises to the cell membrane. It catalyses the reaction 2 glutathione + H2O2 = glutathione disulfide + 2 H2O. Its function is as follows. May constitute a glutathione peroxidase-like protective system against oxidative stresses. In Arabidopsis thaliana (Mouse-ear cress), this protein is Probable glutathione peroxidase 5 (GPX5).